Here is a 99-residue protein sequence, read N- to C-terminus: Large ribosomal subunit protein bL21 (99 aa).

Belongs to the bacterial ribosomal protein bL21 family. In terms of assembly, part of the 50S ribosomal subunit. Contacts protein L20.

Functionally, this protein binds to 23S rRNA in the presence of protein L20. The protein is Large ribosomal subunit protein bL21 of Mycoplasmopsis pulmonis (strain UAB CTIP) (Mycoplasma pulmonis).